We begin with the raw amino-acid sequence, 363 residues long: Peptide chain release factor 1 (363 aa).

At Q237 the chain carries N5-methylglutamine. Over residues 284–296 the composition is skewed to basic and acidic residues; sequence EDEKRRSAEESTR. The disordered stretch occupies residues 284–306; that stretch reads EDEKRRSAEESTRRSLVASGDRS.

Belongs to the prokaryotic/mitochondrial release factor family. In terms of processing, methylated by PrmC. Methylation increases the termination efficiency of RF1.

It is found in the cytoplasm. Its function is as follows. Peptide chain release factor 1 directs the termination of translation in response to the peptide chain termination codons UAG and UAA. The sequence is that of Peptide chain release factor 1 from Shewanella oneidensis (strain ATCC 700550 / JCM 31522 / CIP 106686 / LMG 19005 / NCIMB 14063 / MR-1).